Here is a 313-residue protein sequence, read N- to C-terminus: ADP-L-glycero-D-manno-heptose-6-epimerase (313 aa).

NADP(+) is bound by residues 10–11, 31–32, K38, R53, 75–79, and N92; these read MI, DN, and EGACS. Residue Y139 is the Proton acceptor of the active site. K143 contributes to the NADP(+) binding site. N174 contacts substrate. Positions 175 and 183 each coordinate NADP(+). K183 serves as the catalytic Proton acceptor. Substrate contacts are provided by residues S185, H192, 206 to 209, R214, and Y277; that span reads FAGS.

This sequence belongs to the NAD(P)-dependent epimerase/dehydratase family. HldD subfamily. Homopentamer. Requires NADP(+) as cofactor.

The catalysed reaction is ADP-D-glycero-beta-D-manno-heptose = ADP-L-glycero-beta-D-manno-heptose. It participates in nucleotide-sugar biosynthesis; ADP-L-glycero-beta-D-manno-heptose biosynthesis; ADP-L-glycero-beta-D-manno-heptose from D-glycero-beta-D-manno-heptose 7-phosphate: step 4/4. Its function is as follows. Catalyzes the interconversion between ADP-D-glycero-beta-D-manno-heptose and ADP-L-glycero-beta-D-manno-heptose via an epimerization at carbon 6 of the heptose. The sequence is that of ADP-L-glycero-D-manno-heptose-6-epimerase from Vibrio campbellii (strain ATCC BAA-1116).